A 74-amino-acid polypeptide reads, in one-letter code: Conotoxin Vi15a (74 aa).

Residues 1 to 19 form the signal peptide; that stretch reads MMPVILLLLLSLAIRCADG. Residues 20-43 constitute a propeptide that is removed on maturation; the sequence is KAVQGDSDPSASLLTGDKNHDLPV. A Tryptophan amide modification is found at Trp72.

In terms of processing, contains four disulfide bonds. As to expression, expressed by the venom duct.

The protein localises to the secreted. In Conus virgo (Virgin cone), this protein is Conotoxin Vi15a.